A 142-amino-acid chain; its full sequence is MNSFALLLVCIQACLVQSVFSQCTSRAAVAADRGIIGGYGLGTPCGLGYGLEAPYGRAGYADYGYPAGAYGIDAYGGIGEGNVAVAGELPVAGTTAVAGQVPIMGAVKFGGDVCAAGSVSIAGKCACGCGEYGYGLGAPYLY.

The signal sequence occupies residues 1 to 18; sequence MNSFALLLVCIQACLVQS.

Belongs to the chorion protein family.

This protein is one of many from the eggshell of the gypsy moth. The polypeptide is Chorion class A protein Ld12 (Lymantria dispar (Gypsy moth)).